A 181-amino-acid polypeptide reads, in one-letter code: Adenylyl-sulfate kinase (181 aa).

13–20 (GVSGAGKS) lines the ATP pocket. Ser-87 acts as the Phosphoserine intermediate in catalysis.

Belongs to the APS kinase family.

The catalysed reaction is adenosine 5'-phosphosulfate + ATP = 3'-phosphoadenylyl sulfate + ADP + H(+). The protein operates within sulfur metabolism; hydrogen sulfide biosynthesis; sulfite from sulfate: step 2/3. In terms of biological role, catalyzes the synthesis of activated sulfate. The polypeptide is Adenylyl-sulfate kinase (Burkholderia ambifaria (strain ATCC BAA-244 / DSM 16087 / CCUG 44356 / LMG 19182 / AMMD) (Burkholderia cepacia (strain AMMD))).